Here is a 375-residue protein sequence, read N- to C-terminus: Probable G-protein coupled receptor 34 (375 aa).

Over 1–54 (MTTTSVDSWLCSSHGMHFITNYSDQASQNFSGVPNVTSCPMDEKLLSTVLTTFY) the chain is Extracellular. Asn-21, Asn-29, and Asn-35 each carry an N-linked (GlcNAc...) asparagine glycan. The helical transmembrane segment at 55-75 (SVIFLVGLVGNIIALYVFLGI) threads the bilayer. At 76-81 (HRKRNS) the chain is on the cytoplasmic side. A helical transmembrane segment spans residues 82 to 102 (IQIYLLNVAVADLLLIFCLPF). The Extracellular portion of the chain corresponds to 103-121 (RIMYHINQNKWTLGVILCK). Residues Cys-120 and Cys-197 are joined by a disulfide bond. A helical membrane pass occupies residues 122–142 (VVGTLFYMNMYISIILLGFIS). The Cytoplasmic portion of the chain corresponds to 143–164 (LDRYIKINRSIQQRRAITTKQS). Residues 165–185 (IYVCCIVWTVALAGFLTMIIL) form a helical membrane-spanning segment. Residues 186–209 (TLKKGGHNSTMCFHYRDRHNAKGE) lie on the Extracellular side of the membrane. N-linked (GlcNAc...) asparagine glycosylation is present at Asn-193. A helical transmembrane segment spans residues 210-230 (AIFNFVLVVMFWLIFLLIILS). Topologically, residues 231-262 (YIKIGKNLLRISKRRSKFPNSGKYATTARNSF) are cytoplasmic. A helical transmembrane segment spans residues 263-283 (IVLIIFTICFVPYHAFRFIYI). Topologically, residues 284–303 (SSQLNVSSCYWKEIIHKTNE) are extracellular. N-linked (GlcNAc...) asparagine glycosylation is present at Asn-288. Residues 304–324 (IMLVFSSFNSCLDPVMYFLMS) form a helical membrane-spanning segment. The Cytoplasmic portion of the chain corresponds to 325-375 (SNIRKIMCQLLFRRFQSEASRSESTSEFKPGHSLHDLSVTVKMPQYSTKGN).

This sequence belongs to the G-protein coupled receptor 1 family. In terms of tissue distribution, highly expressed in glial cells such as astrocytes and microglia.

It localises to the cell membrane. Its function is as follows. G-protein-coupled receptor of lysophosphatidylserine (LysoPS) that plays different roles in immune response. Acts a damage-sensing receptor that triggers tissue repair upon recognition of dying neutrophils. Mechanistically, apoptotic neutrophils release lysophosphatydilserine that are recognized by type 3 innate lymphoid cells (ILC3s) via GPR34, which activates downstream PI3K-AKT and RAS-ERK signaling pathways leading to STAT3 activation and IL-22 production. Plays an important role in microglial function, controlling morphology and phagocytosis. This Mus musculus (Mouse) protein is Probable G-protein coupled receptor 34 (Gpr34).